A 346-amino-acid chain; its full sequence is Outer membrane protein A (346 aa).

A signal peptide spans 1–21 (MKKTAIAIAVALAGFATVAQA). The next 8 membrane-spanning stretches (beta stranded) occupy residues 27 to 37 (TWYTGAKLGWS), 55 to 66 (QLGAGAFGGYQV), 70 to 78 (VGFEMGYDW), 96 to 107 (QGVQLTAKLGYP), 112 to 120 (LDIYTRLGG), 142 to 151 (PVFAGGVEYA), 156 to 163 (IATRLEYQ), and 182 to 190 (MLSLGVSYR). The tract at residues 197–208 (APVVAPAPAPAP) is hinge-like. 4 tandem repeats follow at residues 201–202 (AP), 203–204 (AP), 205–206 (AP), and 207–208 (AP). The tract at residues 201–208 (APAPAPAP) is 4 X 2 AA tandem repeats of A-P. The OmpA-like domain maps to 210–338 (VQTKHFTLKS…RVEIEVKGIK (129 aa)). A disulfide bridge connects residues Cys311 and Cys323.

This sequence belongs to the outer membrane OOP (TC 1.B.6) superfamily. OmpA family. Monomer and homodimer.

It localises to the cell outer membrane. With TolR probably plays a role in maintaining the position of the peptidoglycan cell wall in the periplasm. Acts as a porin with low permeability that allows slow penetration of small solutes; an internal gate slows down solute passage. In terms of biological role, required for conjugation with F-type plasmids; probably serves as the mating receptor on recipient cells. This Escherichia coli O157:H7 protein is Outer membrane protein A.